The following is a 261-amino-acid chain: 5'-nucleotidase SurE (261 aa).

Asp8, Asp9, Ser39, and Asn94 together coordinate a divalent metal cation.

Belongs to the SurE nucleotidase family. A divalent metal cation serves as cofactor.

Its subcellular location is the cytoplasm. The catalysed reaction is a ribonucleoside 5'-phosphate + H2O = a ribonucleoside + phosphate. Its function is as follows. Nucleotidase that shows phosphatase activity on nucleoside 5'-monophosphates. This Methanopyrus kandleri (strain AV19 / DSM 6324 / JCM 9639 / NBRC 100938) protein is 5'-nucleotidase SurE.